Here is a 194-residue protein sequence, read N- to C-terminus: uncharacterized protein (194 aa).

Disordered stretches follow at residues 52 to 71 (KGRT…EKYK) and 86 to 194 (AEAL…DGGS). Polar residues-rich tracts occupy residues 53–63 (GRTTQSAINSE), 98–111 (ALTS…SSTN), and 119–132 (IAHS…TSPA). Over residues 133-169 (NRHRRKEKERTRSNHRHGSHRRHEPYRTHLSRHHRHS) the composition is skewed to basic residues. Residues 175-194 (SKRDDRYERRREHSPNDGGS) show a composition bias toward basic and acidic residues.

This is an uncharacterized protein from Schizosaccharomyces pombe (strain 972 / ATCC 24843) (Fission yeast).